Consider the following 374-residue polypeptide: Ferroptosis suppressor protein 1 (374 aa).

Gly2 carries the N-myristoyl glycine lipid modification. A helical transmembrane segment spans residues 13 to 35 (VVIVGGGFAGIAAATQLKSFGIP). Residues 17–21 (GGGFA), Arg53, and Val81 contribute to the 6-hydroxy-FAD site. Position 167 is an N6-acetyllysine (Lys167). Asp285 is a binding site for 6-hydroxy-FAD.

The protein belongs to the FAD-dependent oxidoreductase family. 6-hydroxy-FAD serves as cofactor. Post-translationally, N-myristoylation at Gly-2 mediates the recruitment to lipid droplets and plasma membrane. Acetylation at Lys-167 prevents AIFM2 ubiquitination and degradation, thereby inhibiting ferroptosis. KAT2B mediates acetylation at Lys-167, while HDAC3 removes it. In terms of processing, ubiquitinated. AIFM2 undergoes 'Lys-29'-ubiquitination and proteasomal degradation, which is inhibited by acetylation at Lys-167.

The protein resides in the lipid droplet. The protein localises to the cell membrane. Its subcellular location is the cytoplasm. It is found in the mitochondrion membrane. It localises to the nucleus. It catalyses the reaction ubiquinone-10 + NADH + H(+) = ubiquinol-10 + NAD(+). The catalysed reaction is phylloquinone + NADH + H(+) = phylloquinol + NAD(+). It carries out the reaction menaquinone-4 + NADH + H(+) = menaquinol-4 + NAD(+). The enzyme catalyses menadione + NADH + H(+) = menadiol + NAD(+). With respect to regulation, the modification by 4-hydroxy-2-nonenal (HNE) adduction in mitochondria results in loss of the oxidoreductase activity and activation of a novel function in mitochondrial oxidative stress signaling. Its function is as follows. An NAD(P)H-dependent oxidoreductase that acts as a key inhibitor of ferroptosis. At the plasma membrane, catalyzes reduction of coenzyme Q/ubiquinone-10 to ubiquinol-10, a lipophilic radical-trapping antioxidant that prevents lipid oxidative damage and consequently ferroptosis. Acts in parallel to GPX4 to suppress phospholipid peroxidation and ferroptosis. This anti-ferroptotic function is independent of cellular glutathione levels. Also acts as a potent radical-trapping antioxidant by mediating warfarin-resistant vitamin K reduction in the canonical vitamin K cycle: catalyzes NAD(P)H-dependent reduction of vitamin K (phylloquinone, menaquinone-4 and menadione) to hydroquinone forms. Hydroquinones act as potent radical-trapping antioxidants inhibitor of phospholipid peroxidation and ferroptosis. May play a role in mitochondrial stress signaling. Upon oxidative stress, associates with the lipid peroxidation end product 4-hydroxy-2-nonenal (HNE) forming a lipid adduct devoid of oxidoreductase activity, which then translocates from mitochondria into the nucleus triggering DNA damage and cell death. In Xenopus tropicalis (Western clawed frog), this protein is Ferroptosis suppressor protein 1 (aifm2).